The chain runs to 118 residues: BolA-like protein 3 (118 aa).

The protein belongs to the BolA/IbaG family. As to quaternary structure, interacts with NFU1.

The protein resides in the mitochondrion matrix. Acts as a mitochondrial iron-sulfur (Fe-S) cluster assembly factor that facilitates [4Fe-4S] cluster insertion into a subset of mitochondrial proteins such as lipoyl synthase (LS) and succinate dehydrogenase (SDH). Required during the last step of iron-sulfur protein assembly when the iron-sulfur cluster is inserted into the target protein. Acts together with NFU1, later than BOL1 and GRX5 in the [4Fe-4S] cluster insertion process. Not required for [2Fe-2S] cluster insertion into mitochondrial proteins. This is BolA-like protein 3 from Saccharomyces cerevisiae (strain ATCC 204508 / S288c) (Baker's yeast).